We begin with the raw amino-acid sequence, 353 residues long: (S)-8-amino-7-oxononanoate synthase BioU (353 aa).

Position 10-14 (10-14 (GTGGI)) interacts with NAD(+). Lysine 147 acts as the Nucleophile in catalysis. The residue at position 147 (lysine 147) is an Allysine. 214-215 (GT) is an NAD(+) binding site. Glutamate 218 acts as the Proton acceptor in catalysis. The Proton donor and proton acceptor role is filled by histidine 222.

It belongs to the BioU family. As to quaternary structure, monomer.

The catalysed reaction is (8S)-8-amino-7-oxononanoate + L-lysyl-[protein] + CO2 = (S)-2-amino-6-oxohexanoyl-[protein] + (7R,8S)-8-amino-7-(carboxyamino)nonanoate + 2 H(+). It catalyses the reaction (8S)-8-amino-7-oxononanoate + L-lysyl-[protein] + NADPH + H(+) = N(6)-[(2S,3R)-2-amino-8-carboxyoctan-3-yl]-L-lysyl-[protein] + NADP(+) + H2O. It carries out the reaction N(6)-[(2S,3R)-2-amino-8-carboxyoctan-3-yl]-L-lysyl-[protein] + CO2 + NADP(+) + H2O = (S)-2-amino-6-oxohexanoyl-[protein] + (7R,8S)-8-amino-7-(carboxyamino)nonanoate + NADPH + 3 H(+). The enzyme catalyses (8S)-8-amino-7-oxononanoate + L-lysyl-[protein] + NADH + H(+) = N(6)-[(2S,3R)-2-amino-8-carboxyoctan-3-yl]-L-lysyl-[protein] + NAD(+) + H2O. The catalysed reaction is N(6)-[(2S,3R)-2-amino-8-carboxyoctan-3-yl]-L-lysyl-[protein] + CO2 + NAD(+) + H2O = (S)-2-amino-6-oxohexanoyl-[protein] + (7R,8S)-8-amino-7-(carboxyamino)nonanoate + NADH + 3 H(+). Its pathway is cofactor biosynthesis; biotin biosynthesis. Functionally, a 'suicide' enzyme that participates in biotin synthesis. Catalyzes the formation of (S)-8-amino-7-oxononanoate (DAN-carbamic acid) from (7R,8S)-8-amino-7-(carboxyamino)nonanoate (DAN), a function equivalent to the cannonical BioA reaction and the first half-reaction of BioD. The cellular requirement for biotin is thought be low enough that this single turnover enzyme supplies a sufficient amount of the cofactor. Overall it catalyzes three reactions: formation of a covalent linkage with 8-amino-7-oxononanoate to yield a BioU-DAN conjugate at the epsilon-amino group of Lys124 of BioU using NAD(P)H, carboxylation of the conjugate to form BioU-DAN-carbamic acid, and release of DAN-carbamic acid using NAD(P)+. Complements a bioA deletion in E.coli. This is (S)-8-amino-7-oxononanoate synthase BioU from Haloferax mediterranei (strain ATCC 33500 / DSM 1411 / JCM 8866 / NBRC 14739 / NCIMB 2177 / R-4) (Halobacterium mediterranei).